The primary structure comprises 100 residues: UPF0235 protein TC_0667 (100 aa).

This sequence belongs to the UPF0235 family.

This Chlamydia muridarum (strain MoPn / Nigg) protein is UPF0235 protein TC_0667.